The sequence spans 239 residues: Pathogenesis-related protein 5 (239 aa).

The N-terminal stretch at 1–23 (MANISSIHILFLVFITSGIAVMA) is a signal peptide. 8 cysteine pairs are disulfide-bonded: Cys32/Cys238, Cys79/Cys89, Cys94/Cys99, Cys146/Cys228, Cys151/Cys211, Cys159/Cys174, Cys178/Cys187, and Cys188/Cys198.

The protein belongs to the thaumatin family.

It localises to the secreted. Its subcellular location is the extracellular space. The protein resides in the apoplast. Partially responsible for acquired pathogen resistance. The protein is Pathogenesis-related protein 5 of Arabidopsis thaliana (Mouse-ear cress).